A 108-amino-acid polypeptide reads, in one-letter code: Nucleoid-associated protein PSPTO_3645 (108 aa).

The span at 85 to 96 (QASQDKTASMTA) shows a compositional bias: polar residues. Residues 85 to 108 (QASQDKTASMTAGMQLPPGMKLPF) form a disordered region.

The protein belongs to the YbaB/EbfC family. As to quaternary structure, homodimer.

Its subcellular location is the cytoplasm. It is found in the nucleoid. Its function is as follows. Binds to DNA and alters its conformation. May be involved in regulation of gene expression, nucleoid organization and DNA protection. In Pseudomonas syringae pv. tomato (strain ATCC BAA-871 / DC3000), this protein is Nucleoid-associated protein PSPTO_3645.